The following is a 302-amino-acid chain: Pantothenate synthetase (302 aa).

30-37 provides a ligand contact to ATP; that stretch reads MGALHGGH. Catalysis depends on histidine 37, which acts as the Proton donor. Residue glutamine 61 participates in (R)-pantoate binding. Residue glutamine 61 coordinates beta-alanine. An ATP-binding site is contributed by 147-150; the sequence is GEKD. Glutamine 153 provides a ligand contact to (R)-pantoate. ATP is bound by residues valine 176 and 184-187; that span reads KSSR.

It belongs to the pantothenate synthetase family. As to quaternary structure, homodimer.

Its subcellular location is the cytoplasm. It carries out the reaction (R)-pantoate + beta-alanine + ATP = (R)-pantothenate + AMP + diphosphate + H(+). The protein operates within cofactor biosynthesis; (R)-pantothenate biosynthesis; (R)-pantothenate from (R)-pantoate and beta-alanine: step 1/1. In terms of biological role, catalyzes the condensation of pantoate with beta-alanine in an ATP-dependent reaction via a pantoyl-adenylate intermediate. This is Pantothenate synthetase from Shouchella clausii (strain KSM-K16) (Alkalihalobacillus clausii).